A 128-amino-acid polypeptide reads, in one-letter code: Fluoride-specific ion channel FluC (128 aa).

The next 4 helical transmembrane spans lie at 4-24 (VMGI…RYAI), 37-57 (FGTF…WSFF), 65-85 (TFRL…STFS), and 101-121 (FGYL…GFFI). 2 residues coordinate Na(+): Gly-76 and Thr-79.

Belongs to the fluoride channel Fluc/FEX (TC 1.A.43) family.

The protein resides in the cell inner membrane. It catalyses the reaction fluoride(in) = fluoride(out). Na(+) is not transported, but it plays an essential structural role and its presence is essential for fluoride channel function. Its function is as follows. Fluoride-specific ion channel. Important for reducing fluoride concentration in the cell, thus reducing its toxicity. The sequence is that of Fluoride-specific ion channel FluC from Desulfotalea psychrophila (strain LSv54 / DSM 12343).